Consider the following 331-residue polypeptide: Lactamase-like protein nscB (331 aa).

Residues His106, His108, Asp110, and His111 each coordinate Zn(2+). The active-site Proton donor/acceptor is the Asp110.

This sequence belongs to the metallo-beta-lactamase superfamily. The cofactor is Zn(2+).

It participates in secondary metabolite biosynthesis. Functionally, lactamase-like protein; part of the gene cluster that mediates the biosynthesis of neosartoricin B, a prenylated anthracenone that probably exhibits T-cell antiproliferative activity, suggestive of a physiological role as an immunosuppressive agent. The non-reducing polyketide synthase nscA probably synthesizes and cyclizes the decaketide backbone. The hydrolase nscB then mediates the product release through hydrolysis followed by spontaneous decarboxylation. The prenyltransferase nscD catalyzes the addition of the dimethylallyl group to the aromatic C5. The FAD-dependent monooxygenase nscC is then responsible for the stereospecific hydroxylation at C2. Neosartoricin B can be converted into two additional compounds neosartoricins C and D. Neosartoricin C is a spirocyclic compound that is cyclized through the attack of C3 hydroxyl on C14, followed by dehydration. On the other hand, neosartoricin D is a further cyclized compound in which attack of C2 on C14 in neosartoricin C results in the formation of the acetal-containing dioxabicyclo-octanone ring. Both of these compounds are novel and possibly represent related metabolites of the gene cluster. This Trichophyton equinum (strain ATCC MYA-4606 / CBS 127.97) (Horse ringworm fungus) protein is Lactamase-like protein nscB.